The primary structure comprises 495 residues: ATP synthase subunit beta, chloroplastic (495 aa).

172–179 (GGAGVGKT) provides a ligand contact to ATP.

The protein belongs to the ATPase alpha/beta chains family. As to quaternary structure, F-type ATPases have 2 components, CF(1) - the catalytic core - and CF(0) - the membrane proton channel. CF(1) has five subunits: alpha(3), beta(3), gamma(1), delta(1), epsilon(1). CF(0) has four main subunits: a(1), b(1), b'(1) and c(9-12).

The protein resides in the plastid. It is found in the chloroplast thylakoid membrane. It catalyses the reaction ATP + H2O + 4 H(+)(in) = ADP + phosphate + 5 H(+)(out). In terms of biological role, produces ATP from ADP in the presence of a proton gradient across the membrane. The catalytic sites are hosted primarily by the beta subunits. This Pseudogaltonia clavata (Cape hyacinth) protein is ATP synthase subunit beta, chloroplastic.